Reading from the N-terminus, the 407-residue chain is Peptidase T (407 aa).

A Zn(2+)-binding site is contributed by H81. D83 is a catalytic residue. A Zn(2+)-binding site is contributed by D142. E176 (proton acceptor) is an active-site residue. 3 residues coordinate Zn(2+): E177, D199, and H381.

The protein belongs to the peptidase M20B family. Requires Zn(2+) as cofactor.

The protein localises to the cytoplasm. The enzyme catalyses Release of the N-terminal residue from a tripeptide.. Functionally, cleaves the N-terminal amino acid of tripeptides. The chain is Peptidase T from Streptococcus pneumoniae (strain Hungary19A-6).